The chain runs to 64 residues: Small, acid-soluble spore protein beta (64 aa).

Belongs to the alpha/beta-type SASP family.

In terms of biological role, SASP are bound to spore DNA. They are double-stranded DNA-binding proteins that cause DNA to change to an a-like conformation. They protect the DNA backbone from chemical and enzymatic cleavage and are thus involved in dormant spore's high resistance to UV light. In Paraclostridium bifermentans (Clostridium bifermentans), this protein is Small, acid-soluble spore protein beta.